The chain runs to 311 residues: Ketoisovalerate oxidoreductase subunit VorB (311 aa).

Heterotetramer of one alpha, one beta, one delta and one gamma chain.

It catalyses the reaction 3-methyl-2-oxobutanoate + 2 oxidized [2Fe-2S]-[ferredoxin] + CoA = 2-methylpropanoyl-CoA + 2 reduced [2Fe-2S]-[ferredoxin] + CO2 + H(+). The polypeptide is Ketoisovalerate oxidoreductase subunit VorB (vorB) (Pyrococcus horikoshii (strain ATCC 700860 / DSM 12428 / JCM 9974 / NBRC 100139 / OT-3)).